The following is a 141-amino-acid chain: MAKKVVEVLKLQIPAGKANPSPPVGPALGQRGINIMEFCKAFNEKTKDMMGFTIPVEITVFSDRSFTFITKQPPATDLLKKAAGIQKGSSNPLKDKVGKITKAQLKEVAEKKLPDLNTDDIEQAMKILAGSARSMGIEIVD.

It belongs to the universal ribosomal protein uL11 family. As to quaternary structure, part of the ribosomal stalk of the 50S ribosomal subunit. Interacts with L10 and the large rRNA to form the base of the stalk. L10 forms an elongated spine to which L12 dimers bind in a sequential fashion forming a multimeric L10(L12)X complex. In terms of processing, one or more lysine residues are methylated.

Its function is as follows. Forms part of the ribosomal stalk which helps the ribosome interact with GTP-bound translation factors. The protein is Large ribosomal subunit protein uL11 of Nautilia profundicola (strain ATCC BAA-1463 / DSM 18972 / AmH).